The sequence spans 904 residues: MAASVENRQFSHLEAGLSRSFKPRSDSPVRGCNFPSPNSTNFQKKPNSTIYLDYSSSEDDDDDDEKNEYLQMIKKGNSELEPSVHDTRDEGTADNWIERNFSMIRLTGKHPFNSEPPLNRLMHHGFITPVPLHYVRNHGPVPKGTWDDWTVEVTGLVKRPMKFTMDQLVNEFPCRELPVTLVCAGNRRKEQNMVKQTIGFNWGAAAVSTTIWRGVPLRALLKRCGVFSKNKGALNVCFEGADVLPGGGGSKYGTSIKKEFAMDPARDIIVAYMQNGEKLAPDHGFPVRMIIPGFIGGRMVKWIKRIIVTTQESDSYYHFKDNRVLPPHVDAELANTEAWWYKPEYIINELNINSVITTPCHEEILPINAWTTQRPYTLRGYSYSGGGKKVTRVEVTLDGGETWQVSTLDHPEKPTKYGKYWCWCFWSLEVEVLDLLSAKEIAVRAWDETLNTQPEKLIWNVMGMMNNCWFRVKMNVCKPHKGEIGIVFEHPTQPGNQSGGWMAKERHLEISAEAPQTLKKSISTPFMNTASKMYSMSEVRKHSSADSAWIIVHGHIYDATRFLKDHPGGTDSILINAGTDCTEEFDAIHSDKAKKLLEDFRIGELITTGYTSDSPGNSVHGSSSFSSFLAPIKELVPAQRSVALIPREKIPCKLIDKQSISHDVRKFRFALPSEDQVLGLPVGKHIFLCAVIDDKLCMRAYTPTSTIDEVGYFELVVKIYFKGIHPKFPNGGQMSQYLDSMPLGSFLDVKGPLGHIEYQGKGNFLVHGKQKFAKKLAMIAGGTGITPVYQVMQAILKDPEDDTEMYVVYANRTEDDILLKEELDSWAEKIPERVKVWYVVQDSIKEGWKYSIGFITEAILREHIPEPSHTTLALACGPPPMIQFAVNPNLEKMGYDIKDSLLVF.

Composition is skewed to polar residues over residues 1 to 10 and 35 to 50; these read MAASVENRQF and PSPN…NSTI. A disordered region spans residues 1-65; that stretch reads MAASVENRQF…SSEDDDDDDE (65 aa). Over residues 56–65 the composition is skewed to acidic residues; that stretch reads SSEDDDDDDE. Mo-molybdopterin is bound at residue cysteine 183. A Cytochrome b5 heme-binding domain is found at 531 to 606; it reads SKMYSMSEVR…LEDFRIGELI (76 aa). Residues histidine 566 and histidine 589 each contribute to the heme site. Residues 647–759 enclose the FAD-binding FR-type domain; the sequence is REKIPCKLID…KGPLGHIEYQ (113 aa). FAD is bound by residues 699 to 702, 716 to 720, phenylalanine 721, phenylalanine 728, 733 to 735, and threonine 786; these read RAYT, VVKIY, and QMS.

This sequence belongs to the nitrate reductase family. Homodimer. FAD serves as cofactor. Heme is required as a cofactor. Requires Mo-molybdopterin as cofactor.

It catalyses the reaction nitrite + NAD(+) + H2O = nitrate + NADH + H(+). With respect to regulation, regulated by the nitrogen source and controlled by the circadian rhythm. Nitrate reductase is a key enzyme involved in the first step of nitrate assimilation in plants, fungi and bacteria. The chain is Nitrate reductase [NADH] 2 (NIA2) from Nicotiana tabacum (Common tobacco).